We begin with the raw amino-acid sequence, 529 residues long: Beta-hexosaminidase subunit alpha (529 aa).

An N-terminal signal peptide occupies residues 1–22; sequence MASSRLWFSLLLAAALAGRATA. A propeptide spanning residues 23-88 is cleaved from the precursor; sequence LWPWPQNIQT…PRPYLTGKRH (66 aa). A disulfide bridge connects residues Cys58 and Cys104. 3 N-linked (GlcNAc...) asparagine glycosylation sites follow: Asn115, Asn157, and Asn295. An intrachain disulfide couples Cys277 to Cys328. The active-site Proton donor is Glu323. The critical for hydrolysis GM2 gangliosides stretch occupies residues 423–424; it reads NR. Cys505 and Cys522 are joined by a disulfide.

It belongs to the glycosyl hydrolase 20 family. As to quaternary structure, there are 3 beta-hexosaminidase isozymes: isozyme A (hexosaminidase A) is a heterodimer composed of one subunit alpha and one subunit beta (chain A and B); isozyme B (hexosaminidase B) is a homodimer of two beta subunits (two chains A and B); isozyme S (hexosaminidase S) is a homodimer of two alpha subunits. The composition of the dimer (isozyme A versus isozyme S) has a significant effect on the substrate specificity of the alpha subunit active site.

The protein resides in the lysosome. It catalyses the reaction Hydrolysis of terminal non-reducing N-acetyl-D-hexosamine residues in N-acetyl-beta-D-hexosaminides.. It carries out the reaction N-acetyl-beta-D-galactosaminyl-(1-&gt;4)-beta-D-3-sulfogalactosyl-(1-&gt;4)-beta-D-glucosyl-(1&lt;-&gt;1')-ceramide + H2O = a beta-D-3-sulfogalactosyl-(1-&gt;4)-beta-D-glucosyl-(1&lt;-&gt;1')-ceramide + N-acetyl-beta-D-galactosamine. The catalysed reaction is a ganglioside GM2 (d18:1(4E)) + H2O = a ganglioside GM3 (d18:1(4E)) + N-acetyl-beta-D-galactosamine. The enzyme catalyses a ganglioside GM2 + H2O = a ganglioside GM3 + N-acetyl-beta-D-galactosamine. It catalyses the reaction beta-D-GalNAc-(1-&gt;4)-alpha-L-IdoA-(1-&gt;3)-beta-D-GalNAc-4-sulfate-(1-&gt;4)-alpha-L-IdoA-(1-&gt;3)-D-GalNAc-4-sulfate + H2O = alpha-L-IdoA-(1-&gt;3)-beta-D-GalNAc-4-sulfate-(1-&gt;4)-alpha-L-IdoA-(1-&gt;3)-D-GalNAc-4-sulfate + N-acetyl-D-galactosamine. It carries out the reaction N-acetyl-beta-D-6-sulfogalactosaminyl-(1-&gt;4)-alpha-L-iduronyl-(1-&gt;3)-N-acetyl-D-6-sulfogalactosamine + H2O = alpha-L-iduronyl-(1-&gt;3)-N-acetyl-D-6-sulfogalactosamine + N-acetyl-D-6-sulfogalactosamine. With respect to regulation, addition of GM2A stimulates the hydrolysis of sulfated glycosphingolipid SM2 and the ganglioside GM2. Its function is as follows. Hydrolyzes the non-reducing end N-acetyl-D-hexosamine and/or sulfated N-acetyl-D-hexosamine of glycoconjugates, such as the oligosaccharide moieties from proteins and neutral glycolipids, or from certain mucopolysaccharides. The isozyme S is as active as the isozyme A on the anionic bis-sulfated glycans, the chondroitin-6-sulfate trisaccharide (C6S-3), and the dermatan sulfate pentasaccharide, and the sulfated glycosphingolipid SM2. The isozyme B does not hydrolyze each of these substrates, however hydrolyzes efficiently neutral oligosaccharide. Only the isozyme A is responsible for the degradation of GM2 gangliosides in the presence of GM2A. The protein is Beta-hexosaminidase subunit alpha of Pongo abelii (Sumatran orangutan).